The chain runs to 417 residues: UDP-N-acetylglucosamine 1-carboxyvinyltransferase (417 aa).

Residue 22–23 (KN) participates in phosphoenolpyruvate binding. UDP-N-acetyl-alpha-D-glucosamine is bound at residue Arg-92. Cys-116 functions as the Proton donor in the catalytic mechanism. Cys-116 carries the 2-(S-cysteinyl)pyruvic acid O-phosphothioketal modification. Residues 121–125 (RPIDL), Asp-306, and Ile-328 each bind UDP-N-acetyl-alpha-D-glucosamine.

The protein belongs to the EPSP synthase family. MurA subfamily.

The protein resides in the cytoplasm. The catalysed reaction is phosphoenolpyruvate + UDP-N-acetyl-alpha-D-glucosamine = UDP-N-acetyl-3-O-(1-carboxyvinyl)-alpha-D-glucosamine + phosphate. It participates in cell wall biogenesis; peptidoglycan biosynthesis. In terms of biological role, cell wall formation. Adds enolpyruvyl to UDP-N-acetylglucosamine. This Buchnera aphidicola subsp. Schizaphis graminum (strain Sg) protein is UDP-N-acetylglucosamine 1-carboxyvinyltransferase.